Here is a 346-residue protein sequence, read N- to C-terminus: Biotin synthase (346 aa).

Over residues 1–12 (MPDTATVSSESE) the composition is skewed to polar residues. Residues 1–21 (MPDTATVSSESEFSGHAHVAA) form a disordered region. The 229-residue stretch at 64–292 (NKVQLCSLLS…QSMVRLSAGR (229 aa)) folds into the Radical SAM core domain. Residues Cys-79, Cys-83, and Cys-86 each coordinate [4Fe-4S] cluster. Cys-123, Cys-155, Cys-215, and Arg-287 together coordinate [2Fe-2S] cluster.

Belongs to the radical SAM superfamily. Biotin synthase family. Homodimer. It depends on [4Fe-4S] cluster as a cofactor. [2Fe-2S] cluster serves as cofactor.

The catalysed reaction is (4R,5S)-dethiobiotin + (sulfur carrier)-SH + 2 reduced [2Fe-2S]-[ferredoxin] + 2 S-adenosyl-L-methionine = (sulfur carrier)-H + biotin + 2 5'-deoxyadenosine + 2 L-methionine + 2 oxidized [2Fe-2S]-[ferredoxin]. Its pathway is cofactor biosynthesis; biotin biosynthesis; biotin from 7,8-diaminononanoate: step 2/2. Functionally, catalyzes the conversion of dethiobiotin (DTB) to biotin by the insertion of a sulfur atom into dethiobiotin via a radical-based mechanism. The sequence is that of Biotin synthase from Myxococcus xanthus (strain DK1622).